We begin with the raw amino-acid sequence, 129 residues long: uncharacterized protein (129 aa).

This sequence belongs to the asfivirus C129R family.

The protein localises to the virion. Plays a role in the inhibition of type I interferon signaling pathway. Mechanistically, specifically interacts with 2',3'-cGAMP and cleaves it via its phosphodiesterase activity. In turn, prevents 2',3'-cGAMP interaction with host ER-resident STING1 leading to inhibition of downstream signaling pathway and type I interferon production. This is an uncharacterized protein from Ornithodoros (relapsing fever ticks).